The primary structure comprises 142 residues: Immunoglobulin omega chain (142 aa).

An N-terminal signal peptide occupies residues 1-19 (MAWTSVLLMLLAHLTGCGP). A framework-1 region spans residues 20–41 (QPMVHQPPSASSSLGATIRLSC). The cysteines at positions 41 and 115 are disulfide-linked. The tract at residues 42–56 (TLSNDHNIGIYSIYW) is complementarity-determining-1. Residues 57 to 70 (YQQRPGHPPRFLLR) are framework-2. The segment at 71 to 81 (YFSHSDKHQGP) is complementarity-determining-2. A framework-3 region spans residues 82–115 (DIPPRFSGSKDTARNLGYLSISELQPEDEAVYYC).

The protein belongs to the immunoglobulin superfamily. In terms of tissue distribution, only expressed by pre-B-cells.

Its function is as follows. Associates with the Ig-mu chain to form a molecular complex that is expressed on the surface of pre-B-cells. This complex presumably regulates Ig gene rearrangements in the early steps of B-cell differentiation. This is Immunoglobulin omega chain from Mus musculus (Mouse).